The sequence spans 542 residues: Glucose-6-phosphate isomerase (542 aa).

E353 (proton donor) is an active-site residue. Residues H384 and K508 contribute to the active site.

The protein belongs to the GPI family.

It localises to the cytoplasm. The catalysed reaction is alpha-D-glucose 6-phosphate = beta-D-fructose 6-phosphate. It participates in carbohydrate biosynthesis; gluconeogenesis. The protein operates within carbohydrate degradation; glycolysis; D-glyceraldehyde 3-phosphate and glycerone phosphate from D-glucose: step 2/4. Functionally, catalyzes the reversible isomerization of glucose-6-phosphate to fructose-6-phosphate. This chain is Glucose-6-phosphate isomerase, found in Corynebacterium efficiens (strain DSM 44549 / YS-314 / AJ 12310 / JCM 11189 / NBRC 100395).